The chain runs to 175 residues: Cytochrome c homolog (175 aa).

Over 1–8 (MTGKELNK) the chain is Cytoplasmic. Residues 9-29 (IVAAILFASLIAMIVRFVANI) form a helical; Signal-anchor membrane-spanning segment. Residues 30–175 (LYKPNLQVLN…LFLKNYVHDK (146 aa)) lie on the Periplasmic side of the membrane. 4 residues coordinate heme c: C84, C87, H88, and M150.

The protein belongs to the cytochrome c family. In terms of processing, binds 1 heme c group covalently per subunit.

It localises to the cell membrane. Functionally, may be involved in electron transfer from bc1 complex to aa3. The protein is Cytochrome c homolog (cycM) of Rickettsia typhi (strain ATCC VR-144 / Wilmington).